The primary structure comprises 1089 residues: WD repeat-containing protein on Y chromosome (1089 aa).

WD repeat units lie at residues 155–199 (EEVA…IRTA), 207–249 (PHAV…RGPF), 329–368 (RIPL…EPSA), 372–411 (GHNG…LLQT), 462–501 (THAA…RKII), 514–553 (TIDI…VIRN), and 601–641 (FHTD…RRYS). The tract at residues 661–684 (KRSKRWASRAPHSGSHMMSHTGSH) is disordered. Low complexity predominate over residues 672–684 (HSGSHMMSHTGSH). WD repeat units follow at residues 767-806 (KTGD…IPEA) and 850-889 (GHLK…LGTL). A disordered region spans residues 1049–1089 (LNIKLPSRRRSDRTNDPRNMRTAKTRGDMGLGHRSSHTSQN).

The sequence is that of WD repeat-containing protein on Y chromosome from Drosophila willistoni (Fruit fly).